The chain runs to 142 residues: HTH-type transcriptional regulator MntR (142 aa).

Residues 1–63 (MPTPSMEDYI…YEKYRGLVLT (63 aa)) form the HTH dtxR-type domain. Positions 8, 11, 77, 99, 102, and 103 each coordinate Mn(2+).

This sequence belongs to the DtxR/MntR family. Homodimer.

It is found in the cytoplasm. With respect to regulation, DNA binding is strongly activated by Mn(2+). Central regulator of manganese homeostasis. This Bacillus cytotoxicus (strain DSM 22905 / CIP 110041 / 391-98 / NVH 391-98) protein is HTH-type transcriptional regulator MntR.